Consider the following 405-residue polypeptide: Cystathionine gamma-lyase (405 aa).

Residues R62, Y114, and R119 each contribute to the substrate site. K212 is subject to N6-(pyridoxal phosphate)lysine. E339 lines the substrate pocket.

Belongs to the trans-sulfuration enzymes family. As to quaternary structure, homotetramer. Interacts with CALM in a calcium-dependent manner. The cofactor is pyridoxal 5'-phosphate.

It is found in the cytoplasm. The catalysed reaction is L,L-cystathionine + H2O = 2-oxobutanoate + L-cysteine + NH4(+). It participates in amino-acid biosynthesis; L-cysteine biosynthesis; L-cysteine from L-homocysteine and L-serine: step 2/2. Functionally, catalyzes the last step in the trans-sulfuration pathway from methionine to cysteine. Has broad substrate specificity. Converts cystathionine to cysteine, ammonia and 2-oxobutanoate. Converts two cysteine molecules to lanthionine and hydrogen sulfide. Can also accept homocysteine as substrate. Specificity depends on the levels of the endogenous substrates. Generates the endogenous signaling molecule hydrogen sulfide (H2S), and so contributes to the regulation of blood pressure. Acts as a cysteine-protein sulfhydrase by mediating sulfhydration of target proteins: sulfhydration consists of converting -SH groups into -SSH on specific cysteine residues of target proteins such as GAPDH, PTPN1 and NF-kappa-B subunit RELA, thereby regulating their function. The polypeptide is Cystathionine gamma-lyase (CTH) (Bos taurus (Bovine)).